Consider the following 1032-residue polypeptide: uncharacterized protein (1032 aa).

Topologically, residues 1–17 (MYEEIRMKFTDIFIRRP) are cytoplasmic. The chain crosses the membrane as a helical span at residues 18–36 (VLAVSISLLMIILGLQAIS). Over 37–337 (KLAVREYPKM…TIAINSSIHE (301 aa)) the chain is Periplasmic. A helical transmembrane segment spans residues 338–357 (VIKTIGEATLIVLVVILMFI). Residues 358-363 (GSFRAI) are Cytoplasmic-facing. A helical membrane pass occupies residues 364–383 (LIPILAIPISLIGVLMLLQS). Over 384–389 (FNFSIN) the chain is Periplasmic. Residues 390 to 411 (LMTLLALILAIGLVVDDAIVVL) traverse the membrane as a helical segment. At 412–438 (ENIDRHIKAGETPFRAAIIGTREIAVP) the chain is on the cytoplasmic side. A helical transmembrane segment spans residues 439-457 (VISMTIALIAVYSPMALMG). The Periplasmic portion of the chain corresponds to 458 to 470 (GITGTLFKEFALT). Residues 471 to 493 (LAGAVFISGVVALTLSPMMSSKL) form a helical membrane-spanning segment. Over 494–529 (LKSNAKPTWMEERVEHTLGKVNRVYEYMLDLVMLNR) the chain is Cytoplasmic. A helical membrane pass occupies residues 530-548 (KSMLAFAVVIFSTLPFLFN). Residues 549–852 (SLSSELTPNE…ARQLVQEGNA (304 aa)) are Periplasmic-facing. The helical transmembrane segment at 853–872 (LAVTFALAVIIIFLVLAIQF) threads the bilayer. Residues 873 to 878 (ESIRDP) lie on the Cytoplasmic side of the membrane. The chain crosses the membrane as a helical span at residues 879-898 (MVIMISVPLAVSGALVSLNI). The Periplasmic portion of the chain corresponds to 899–910 (LSFFSIAGTTLN). Residues 911–932 (IYSQVGLITLVGLITKHGILMC) form a helical membrane-spanning segment. At 933–960 (EVAKEEQLNHGKTRIEAITHAAKVRLRP) the chain is on the cytoplasmic side. A helical transmembrane segment spans residues 961 to 979 (ILMTTAAMVAGLIPLLYAT). Residues 980–992 (GAGAVSRFSIGIV) are Periplasmic-facing. Residues 993–1015 (IVAGLSIGTIFTLFVLPVVYSYV) traverse the membrane as a helical segment. Topologically, residues 1016-1032 (ATEHKPLPVFDENKTTH) are cytoplasmic.

It belongs to the resistance-nodulation-cell division (RND) (TC 2.A.6) family.

The protein resides in the cell inner membrane. In terms of biological role, could be a drug efflux pump. This is an uncharacterized protein from Haemophilus influenzae (strain ATCC 51907 / DSM 11121 / KW20 / Rd).